The primary structure comprises 359 residues: Peptide chain release factor 1 (359 aa).

Gln-234 bears the N5-methylglutamine mark. The disordered stretch occupies residues 283 to 305 (SQKDAARAADRRAQVGSGDRSER).

Belongs to the prokaryotic/mitochondrial release factor family. In terms of processing, methylated by PrmC. Methylation increases the termination efficiency of RF1.

It localises to the cytoplasm. Functionally, peptide chain release factor 1 directs the termination of translation in response to the peptide chain termination codons UAG and UAA. The sequence is that of Peptide chain release factor 1 from Methylobacterium nodulans (strain LMG 21967 / CNCM I-2342 / ORS 2060).